The primary structure comprises 538 residues: Sterol esterase 2 (538 aa).

The Cytoplasmic portion of the chain corresponds to 1–11 (MVNKVVDEVQR). The chain crosses the membrane as a helical; Signal-anchor for type II membrane protein span at residues 12–32 (LVSAIILTSFMTGLFILSLWK). Residues 33 to 538 (NYVTVHFQHK…IENLRFPNAR (506 aa)) lie on the Lumenal side of the membrane. The disordered stretch occupies residues 42–87 (KNDPRDTRSSRTKIQPNDKKKKRPARHSRPLSISSTTPLDLQRDQE). The segment covering 60–70 (KKKKRPARHSR) has biased composition (basic residues). Residues S73 and S107 each carry the phosphoserine modification. S287 acts as the Nucleophile in catalysis. Catalysis depends on charge relay system residues D480 and H511.

This sequence belongs to the AB hydrolase superfamily. Post-translationally, not glycosylated.

The protein resides in the cell membrane. The catalysed reaction is a sterol ester + H2O = a sterol + a fatty acid + H(+). Mediates the hydrolysis of steryl esters. Required for mobilization of steryl ester, thereby playing a central role in lipid metabolism. This is Sterol esterase 2 (YEH2) from Saccharomyces cerevisiae (strain ATCC 204508 / S288c) (Baker's yeast).